The sequence spans 143 residues: Small ribosomal subunit protein uS12 (143 aa).

It belongs to the universal ribosomal protein uS12 family. In terms of assembly, component of the 40S small ribosomal subunit.

It is found in the cytoplasm. The protein resides in the cytosol. Its subcellular location is the rough endoplasmic reticulum. The chain is Small ribosomal subunit protein uS12 (rps23) from Gillichthys mirabilis (Long-jawed mudsucker).